A 335-amino-acid polypeptide reads, in one-letter code: Cytoskeleton protein RodZ (335 aa).

Over 1 to 111 (MNTEATHDQN…LGKRRKKRDG (111 aa)) the chain is Cytoplasmic. The HTH cro/C1-type domain occupies 19-71 (LRNAREQLGLSQQAVAERLCLKVSTVRDIEEDKAPADLASTFLRGYIRSYARL). The segment at residues 30–49 (QQAVAERLCLKVSTVRDIEE) is a DNA-binding region (H-T-H motif). The chain crosses the membrane as a helical; Signal-anchor for type II membrane protein span at residues 112 to 132 (WLMTFTWLVLFVVIGLSGAWW). The Periplasmic segment spans residues 133-335 (WQDHKAQQEE…TLNAEQSPAQ (203 aa)). Polar residues predominate over residues 148-164 (DQSSAELNNNQSQSVPL). The disordered stretch occupies residues 148–244 (DQSSAELNNN…PLPTDQAGVT (97 aa)). Composition is skewed to low complexity over residues 165-205 (DTST…DPQQ) and 217-239 (DTAA…LPTD).

The protein belongs to the RodZ family.

It is found in the cell inner membrane. Functionally, cytoskeletal protein that is involved in cell-shape control through regulation of the length of the long axis. The sequence is that of Cytoskeleton protein RodZ from Escherichia coli O6:H1 (strain CFT073 / ATCC 700928 / UPEC).